Consider the following 1086-residue polypeptide: Transcription initiation factor TFIID subunit 2 (1086 aa).

Positions 1-11 (MDFSEASTSGD) are enriched in polar residues. 2 disordered regions span residues 1-53 (MDFS…PPPV) and 1064-1086 (GYEA…NLMQ). Composition is skewed to pro residues over residues 19–36 (PFPP…PPLA) and 44–53 (APPPLQPPPV). The span at 1067-1078 (AARRSPPRRDFG) shows a compositional bias: basic and acidic residues.

This sequence belongs to the TAF2 family. Component of the TFIID basal transcription factor complex, composed of TATA-box-binding protein tbp-1, and a number of TBP-associated factors (TAFs).

Its subcellular location is the nucleus. The TFIID basal transcription factor complex plays a major role in the initiation of RNA polymerase II (Pol II)-dependent transcription. TFIID recognizes and binds promoters via its subunit tbp-1, a TATA-box-binding protein, and promotes assembly of the pre-initiation complex (PIC). The TFIID complex consists of tbp-1 and TBP-associated factors (TAFs), including taf-2. May regulate RNA polymerase II activity and thereby may control transcription initiation by RNA polymerase II. In Caenorhabditis elegans, this protein is Transcription initiation factor TFIID subunit 2.